Here is a 297-residue protein sequence, read N- to C-terminus: AKT-interacting protein (297 aa).

Residues 1–13 (MNLNPFWSMSTNT) show a composition bias toward polar residues. Residues 1-45 (MNLNPFWSMSTNTGRKRSDGEEQSGEQQQQQRASPARPSFGKKQL) are disordered. A compositionally biased stretch (low complexity) spans 25–39 (GEQQQQQRASPARPS). Residues 79–227 (YLEYSLLAEF…VVDSVKLCNS (149 aa)) enclose the UBC core domain. The interval 262-297 (KRRPEDHHKGLQVSGLSWVKPGSTQPFSKDDNPPQN) is disordered.

The protein belongs to the ubiquitin-conjugating enzyme family. FTS subfamily.

The protein localises to the cytoplasm. It is found in the cell membrane. May function to promote vesicle trafficking and/or fusion. May also regulate apoptosis. The chain is AKT-interacting protein (aktip) from Salmo salar (Atlantic salmon).